A 406-amino-acid polypeptide reads, in one-letter code: O-succinylhomoserine sulfhydrylase (406 aa).

An N6-(pyridoxal phosphate)lysine modification is found at Lys-219.

It belongs to the trans-sulfuration enzymes family. MetZ subfamily. Homotetramer. It depends on pyridoxal 5'-phosphate as a cofactor.

The enzyme catalyses O-succinyl-L-homoserine + hydrogen sulfide = L-homocysteine + succinate. It functions in the pathway amino-acid biosynthesis; L-methionine biosynthesis via de novo pathway; L-homocysteine from O-succinyl-L-homoserine: step 1/1. Its function is as follows. Catalyzes the formation of L-homocysteine from O-succinyl-L-homoserine (OSHS) and hydrogen sulfide. The sequence is that of O-succinylhomoserine sulfhydrylase from Mycobacterium tuberculosis (strain CDC 1551 / Oshkosh).